Reading from the N-terminus, the 566-residue chain is Solute carrier family 2, facilitated glucose transporter member 9 (566 aa).

Residues 1–31 (MARKQNRNSKELGLAPLADDTSHAGPPGPGR) are disordered. The Cytoplasmic portion of the chain corresponds to 1-51 (MARKQNRNSKELGLAPLADDTSHAGPPGPGRALLECDHLRSGLPDGRRRKD). Phosphoserine is present on Ser9. The helical transmembrane segment at 52–72 (WSCSLLVASLAGAFGSSFLYG) threads the bilayer. Topologically, residues 73–107 (YNLSVVNAPTPYIKAFYNESWERRHGRPIDPDTLT) are extracellular. N-linked (GlcNAc...) asparagine glycosylation is found at Asn74 and Asn90. Residues 108 to 128 (LLWSVTVSIFAIGGLVGTLMV) form a helical membrane-spanning segment. Topologically, residues 129 to 140 (KMIGKVLGRKHT) are cytoplasmic. Residues 141-161 (LLANNGFAISAALLMACSLQA) form a helical membrane-spanning segment. At 162 to 171 (GAFEMLIVGR) the chain is on the extracellular side. The helical transmembrane segment at 172 to 192 (FIMGIDGGIALSVLPMYLSEI) threads the bilayer. Residues 193-200 (SPKEIRGS) are Cytoplasmic-facing. A helical membrane pass occupies residues 201–221 (LGQVTAIFICIGVFTGQLLGL). Over 222-231 (PELLGKESTW) the chain is Extracellular. A helical membrane pass occupies residues 232-252 (PYLFGVIVVPAVVQLLSLPFL). The Cytoplasmic segment spans residues 253–316 (PDSPRYLLLE…LRAPYVRWQV (64 aa)). The helical transmembrane segment at 317-337 (VTVIVTMACYQLCGLNAIWFY) threads the bilayer. Over 338–354 (TNSIFGKAGIPPAKIPY) the chain is Extracellular. A helical transmembrane segment spans residues 355 to 375 (VTLSTGGIETLAAIFSGLVIE). Residues 376–381 (HLGRRP) lie on the Cytoplasmic side of the membrane. A helical membrane pass occupies residues 382–402 (LLIGGFGLMALFFGTLTVTLT). The Extracellular segment spans residues 403 to 415 (LQDRAPWVPYLSI). The helical transmembrane segment at 416-436 (VGILAIIASFCSGPGGIPFIL) threads the bilayer. The Cytoplasmic portion of the chain corresponds to 437 to 451 (TGEFFQQSQRPAAFI). A helical membrane pass occupies residues 452–472 (IAGTVNWLSNFAVGLLFPFIQ). Over 473 to 478 (KSLDTY) the chain is Extracellular. Residues 479 to 499 (CFLVFATICMTGAIYLYFVLP) form a helical membrane-spanning segment. Over 500–566 (ETKNRTYAEI…YMDDLTFQET (67 aa)) the chain is Cytoplasmic. Residue Ser514 is modified to Phosphoserine. Basic and acidic residues predominate over residues 524-539 (EKIDSAVTDGKTKGRP). The segment at 524–543 (EKIDSAVTDGKTKGRPEQVS) is disordered.

It belongs to the major facilitator superfamily. Sugar transporter (TC 2.A.1.1) family.

The protein resides in the basolateral cell membrane. It is found in the apical cell membrane. It carries out the reaction urate(out) = urate(in). Functionally, high-capacity urate transporter, which may play a role in the urate reabsorption by proximal tubules. May have a residual high-affinity, low-capacity glucose and fructose transporter activity. Transports urate at rates 45- to 60-fold faster than glucose. Does not transport galactose. May mediate small uptake of adenine but not of other nucleobases. The chain is Solute carrier family 2, facilitated glucose transporter member 9 from Pongo abelii (Sumatran orangutan).